The following is a 799-amino-acid chain: Protein translocase subunit SecA 1 (799 aa).

ATP is bound by residues Q85, 103–107 (GEGKT), and D504.

This sequence belongs to the SecA family. In terms of assembly, monomer and homodimer. Part of the essential Sec protein translocation apparatus which comprises SecA, SecYEG and auxiliary proteins SecDF. Other proteins may also be involved.

It localises to the cell membrane. The protein resides in the cytoplasm. The catalysed reaction is ATP + H2O + cellular proteinSide 1 = ADP + phosphate + cellular proteinSide 2.. Its function is as follows. Part of the Sec protein translocase complex. Interacts with the SecYEG preprotein conducting channel. Has a central role in coupling the hydrolysis of ATP to the transfer of proteins into and across the cell membrane, serving as an ATP-driven molecular motor driving the stepwise translocation of polypeptide chains across the membrane. This is Protein translocase subunit SecA 1 from Lactobacillus johnsonii (strain CNCM I-12250 / La1 / NCC 533).